The chain runs to 653 residues: Fusexin 1 (653 aa).

The first 23 residues, methionine 1–alanine 23, serve as a signal peptide directing secretion. The Extracellular portion of the chain corresponds to alanine 24 to glycine 559. 4 disulfides stabilise this stretch: cysteine 126-cysteine 166, cysteine 397-cysteine 440, cysteine 467-cysteine 490, and cysteine 502-cysteine 519. The fusion loop stretch occupies residues aspartate 154–glutamine 159. A helical membrane pass occupies residues alanine 560–valine 580. Residues glycine 581–aspartate 600 lie on the Cytoplasmic side of the membrane. The next 2 helical transmembrane spans lie at alanine 601–glutamine 621 and leucine 622–leucine 642. The Cytoplasmic portion of the chain corresponds to tyrosine 643 to leucine 653.

The protein belongs to the HAP2/GCS1 family. Fusexin 1 subfamily. Homotrimer stabilized by interdomain contacts and numerous Ca(2+) and Na(+) ions.

It is found in the cell surface. It localises to the cell membrane. Exhibits fusogenic activity. Mediates cell-cell fusion in mammalian cells (bilateral fusion). The sequence is that of Fusexin 1 from Haloferax sp. (strain Q22).